A 484-amino-acid polypeptide reads, in one-letter code: Ribosome biogenesis protein YTM1 (484 aa).

The tract at residues 11 to 94 (VKVLFTTTEQ…EKTVTLQYVR (84 aa)) is ubiquitin-like (UBL) domain. WD repeat units lie at residues 121–160 (SSAGKWSGSSFLQGQDRILSASYDGLLRIWNGSGQALATS), 166–204 (GPLCGLKSAKFMSSTKIAAAGLDRTVRIWDYTEADDHFS), 215–254 (GHRSIIESLGVDGSSRRILTACADGSIGLWTTSKKLAPEA), 289–329 (VHSR…VVST), 331–372 (TTSN…AATS), 378–418 (GHIN…PAAG), and 448–484 (GEGVKVFDVQWDKTWGIVSGGEDKKVQINKGRNIISS).

It belongs to the WD repeat WDR12/YTM1 family. In terms of assembly, component of the NOP7 complex, composed of ERB1, NOP7 and YTM1. The complex is held together by ERB1, which interacts with NOP7 via its N-terminal domain and with YTM1 via a high-affinity interaction between the seven-bladed beta-propeller domains of the 2 proteins. The NOP7 complex associates with the 66S pre-ribosome. Interacts (via UBL domain) with MDN1 (via VWFA/MIDAS domain).

The protein resides in the nucleus. Its subcellular location is the nucleolus. The protein localises to the nucleoplasm. Its function is as follows. Component of the NOP7 complex, which is required for maturation of the 25S and 5.8S ribosomal RNAs and formation of the 60S ribosome. The chain is Ribosome biogenesis protein YTM1 from Pyricularia oryzae (strain 70-15 / ATCC MYA-4617 / FGSC 8958) (Rice blast fungus).